A 268-amino-acid chain; its full sequence is TATA-box-binding protein (268 aa).

Over residues 1–24 (MDSLTTHPATAQQARAFTSPSSLS) the composition is skewed to polar residues. Positions 1-86 (MDSLTTHPAT…TPAATPGASA (86 aa)) are disordered. The span at 50–86 (NGQSANGNVNGQQQGANAANGNGVMPATPAATPGASA) shows a compositional bias: low complexity. 2 repeat units span residues 95–171 (LQNI…ARII) and 185–262 (IQNI…YPVL).

Belongs to the TBP family. In terms of assembly, belongs to the TFIID complex together with the TBP-associated factors (TAFs). Binds DNA as monomer.

It localises to the nucleus. Functionally, general transcription factor that functions at the core of the DNA-binding multiprotein factor TFIID. Binding of TFIID to the TATA box is the initial transcriptional step of the pre-initiation complex (PIC), playing a role in the activation of eukaryotic genes transcribed by RNA polymerase II. This is TATA-box-binding protein (tbpA) from Emericella nidulans (strain FGSC A4 / ATCC 38163 / CBS 112.46 / NRRL 194 / M139) (Aspergillus nidulans).